The primary structure comprises 147 residues: Protein archease (147 aa).

Positions 17, 146, and 147 each coordinate Ca(2+).

It belongs to the archease family.

Activates the tRNA-splicing ligase complex by facilitating the enzymatic turnover of catalytic subunit RtcB. Acts by promoting the guanylylation of RtcB, a key intermediate step in tRNA ligation. Can also alter the NTP specificity of RtcB such that ATP, dGTP or ITP is used efficiently. In Pyrobaculum calidifontis (strain DSM 21063 / JCM 11548 / VA1), this protein is Protein archease.